We begin with the raw amino-acid sequence, 741 residues long: Transketolase-1, chloroplastic (741 aa).

Residues 1-66 constitute a chloroplast transit peptide; it reads MASTSSLALS…NRSLRPLVRA (66 aa). The segment at 22–51 is disordered; it reads GSDQRGSLPAFSGLKSTGSRASASSRRRIA. Ala67 is subject to N-acetylalanine. Substrate is bound at residue His103. Residues His143 and 192–194 each bind thiamine diphosphate; that span reads GPL. Residue Asp233 participates in Mg(2+) binding. Gly234 and Asn263 together coordinate thiamine diphosphate. The Mg(2+) site is built by Asn263 and Ile265. His340 contacts substrate. Thiamine diphosphate is bound at residue His340. Ser428 is modified (phosphoserine). Substrate is bound by residues Arg434 and Ser461. Positions 488 and 515 each coordinate thiamine diphosphate. Glu488 serves as the catalytic Proton donor. The substrate site is built by His539, Asp547, and Arg598.

It belongs to the transketolase family. As to quaternary structure, homodimer. Requires Mg(2+) as cofactor. Ca(2+) serves as cofactor. Mn(2+) is required as a cofactor. The cofactor is Co(2+). It depends on thiamine diphosphate as a cofactor.

The protein localises to the plastid. It is found in the chloroplast stroma. It carries out the reaction D-sedoheptulose 7-phosphate + D-glyceraldehyde 3-phosphate = aldehydo-D-ribose 5-phosphate + D-xylulose 5-phosphate. It functions in the pathway carbohydrate biosynthesis; Calvin cycle. Its function is as follows. Catalyzes the reversible transfer of a two-carbon ketol group from fructose-6-phosphate or sedoheptulose-7-phosphate to glyceraldehyde-3-phosphate to yield xylulose-5-phosphate and erythrose-4-phosphate or ribose-5-phosphate, respectively. Could act as a stress sensor involved in adaptation process. This Arabidopsis thaliana (Mouse-ear cress) protein is Transketolase-1, chloroplastic (TKL-1).